Consider the following 296-residue polypeptide: 4-hydroxybenzoate octaprenyltransferase (296 aa).

Helical transmembrane passes span 28–48 (PIGI…AGKG), 52–72 (LINI…GCVI), 102–122 (ALVF…LTNA), 146–166 (YYPQ…AFTA), 169–189 (GDLP…TVGY), 219–239 (VIIL…GARF), 241–261 (LGGW…WEFW), and 275–295 (FLHN…DYAF).

It belongs to the UbiA prenyltransferase family. Mg(2+) serves as cofactor.

The protein resides in the cell inner membrane. The enzyme catalyses all-trans-octaprenyl diphosphate + 4-hydroxybenzoate = 4-hydroxy-3-(all-trans-octaprenyl)benzoate + diphosphate. Its pathway is cofactor biosynthesis; ubiquinone biosynthesis. Functionally, catalyzes the prenylation of para-hydroxybenzoate (PHB) with an all-trans polyprenyl group. Mediates the second step in the final reaction sequence of ubiquinone-8 (UQ-8) biosynthesis, which is the condensation of the polyisoprenoid side chain with PHB, generating the first membrane-bound Q intermediate 3-octaprenyl-4-hydroxybenzoate. The sequence is that of 4-hydroxybenzoate octaprenyltransferase from Pseudomonas fluorescens (strain SBW25).